The sequence spans 145 residues: Large-conductance mechanosensitive channel (145 aa).

The next 2 helical transmembrane spans lie at 30-50 and 74-94; these read VAVV…AWLM and GELV…FLII.

It belongs to the MscL family. As to quaternary structure, homopentamer.

The protein localises to the cell inner membrane. Its function is as follows. Channel that opens in response to stretch forces in the membrane lipid bilayer. May participate in the regulation of osmotic pressure changes within the cell. The protein is Large-conductance mechanosensitive channel of Synechocystis sp. (strain ATCC 27184 / PCC 6803 / Kazusa).